The sequence spans 213 residues: Urease accessory protein UreG (213 aa).

Residue 10 to 17 participates in GTP binding; that stretch reads GPVGSGKT.

Belongs to the SIMIBI class G3E GTPase family. UreG subfamily. In terms of assembly, homodimer. UreD, UreF and UreG form a complex that acts as a GTP-hydrolysis-dependent molecular chaperone, activating the urease apoprotein by helping to assemble the nickel containing metallocenter of UreC. The UreE protein probably delivers the nickel.

It is found in the cytoplasm. In terms of biological role, facilitates the functional incorporation of the urease nickel metallocenter. This process requires GTP hydrolysis, probably effectuated by UreG. This is Urease accessory protein UreG from Deinococcus radiodurans (strain ATCC 13939 / DSM 20539 / JCM 16871 / CCUG 27074 / LMG 4051 / NBRC 15346 / NCIMB 9279 / VKM B-1422 / R1).